Consider the following 232-residue polypeptide: Putative homeobox protein NANOG2 (232 aa).

The segment at M1–Q39 is disordered. Over residues S11 to K25 the composition is skewed to polar residues. Over residues S26 to P35 the composition is skewed to basic and acidic residues. 8 consecutive repeat copies span residues W123–T127, W128–T132, W133–T137, W143–S147, W148–T152, W153–S157, W158–A162, and W163–F167. The segment at W123–F167 is 8 X repeats starting with a Trp in each unit. The sufficient for transactivation activity stretch occupies residues W123 to F167. Residues Y168 to V232 form a sufficient for strong transactivation activity region.

It belongs to the Nanog homeobox family.

It localises to the nucleus. Functionally, probable transcriptional regulator. The sequence is that of Putative homeobox protein NANOG2 (NANOGP1) from Homo sapiens (Human).